The following is a 444-amino-acid chain: Acyl-CoA 6-desaturase (444 aa).

At 1–131 (MGKGGNQGEG…DMNLFKTNHV (131 aa)) the chain is on the cytoplasmic side. The Cytochrome b5 heme-binding domain occupies 18 to 95 (VPTFSWEEIQ…LKPLLIGELA (78 aa)). Residues 132 to 152 (FFLLLLAHIIALESIAWFTVF) form a helical membrane-spanning segment. At 153–157 (YFGNG) the chain is on the lumenal side. The helical transmembrane segment at 158-178 (WISTLITAFVLATSQAQAGWL) threads the bilayer. Topologically, residues 179–264 (QHDYGHLSVY…KYLPYNHQHE (86 aa)) are cytoplasmic. Positions 180–184 (HDYGH) match the Histidine box-1 motif. The Histidine box-2 motif lies at 217 to 221 (HFQHH). A helical transmembrane segment spans residues 265–285 (YFFLIGPPLLIPMYFQYQIIM). Residues 286 to 305 (TMIVHKNWVDLAWAISYYIR) lie on the Lumenal side of the membrane. Residues 306 to 326 (FFITYIPFYGILGALLFLNFI) form a helical membrane-spanning segment. Over 327-444 (RFLESHWFVW…KLWLDAYLHK (118 aa)) the chain is Cytoplasmic. Positions 382–386 (QIEHH) match the Histidine box-3 motif.

The protein belongs to the fatty acid desaturase type 1 family.

It localises to the endoplasmic reticulum membrane. It catalyses the reaction (9Z,12Z)-octadecadienoyl-CoA + 2 Fe(II)-[cytochrome b5] + O2 + 2 H(+) = (6Z,9Z,12Z)-octadecatrienoyl-CoA + 2 Fe(III)-[cytochrome b5] + 2 H2O. The catalysed reaction is (9Z,12Z,15Z)-octadecatrienoyl-CoA + 2 Fe(II)-[cytochrome b5] + O2 + 2 H(+) = (6Z,9Z,12Z,15Z)-octadecatetraenoyl-CoA + 2 Fe(III)-[cytochrome b5] + 2 H2O. The enzyme catalyses (9Z,12Z,15Z,18Z,21Z)-tetracosapentaenoyl-CoA + 2 Fe(II)-[cytochrome b5] + O2 + 2 H(+) = (6Z,9Z,12Z,15Z,18Z,21Z)-tetracosahexaenoyl-CoA + 2 Fe(III)-[cytochrome b5] + 2 H2O. It carries out the reaction (11E)-octadecenoyl-CoA + 2 Fe(II)-[cytochrome b5] + O2 + 2 H(+) = (6Z,11E)-octadecadienoyl-CoA + 2 Fe(III)-[cytochrome b5] + 2 H2O. It catalyses the reaction (11Z,14Z)-eicosadienoyl-CoA + 2 Fe(II)-[cytochrome b5] + O2 + 2 H(+) = (8Z,11Z,14Z)-eicosatrienoyl-CoA + 2 Fe(III)-[cytochrome b5] + 2 H2O. The catalysed reaction is (11Z,14Z,17Z)-eicosatrienoyl-CoA + 2 Fe(II)-[cytochrome b5] + O2 + 2 H(+) = (8Z,11Z,14Z,17Z)-eicosatetraenoyl-CoA + 2 Fe(III)-[cytochrome b5] + 2 H2O. It participates in lipid metabolism; polyunsaturated fatty acid biosynthesis. Involved in the biosynthesis of highly unsaturated fatty acids (HUFA) from the essential polyunsaturated fatty acids (PUFA) linoleic acid (LA) (18:2n-6) and alpha-linolenic acid (ALA) (18:3n-3) precursors, acting as a fatty acyl-coenzyme A (CoA) desaturase that introduces a cis double bond at carbon 6 of the fatty acyl chain. Catalyzes the first and rate limiting step in this pathway which is the desaturation of LA (18:2n-6) and ALA (18:3n-3) into gamma-linoleate (GLA) (18:3n-6) and stearidonate (18:4n-3), respectively. Subsequently, in the biosynthetic pathway of HUFA n-3 series, it desaturates tetracosapentaenoate (24:5n-3) to tetracosahexaenoate (24:6n-3), which is then converted to docosahexaenoate (DHA)(22:6n-3), an important lipid for nervous system function. It can also desaturate (11E)-octadecenoate (trans-vaccenoate) at carbon 6 generating (6Z,11E)-octadecadienoate. In addition to Delta-6 activity, this enzyme exhibits Delta-8 activity with slight biases toward n-3 fatty acyl-CoA substrates. This chain is Acyl-CoA 6-desaturase (FADS2), found in Pongo abelii (Sumatran orangutan).